A 311-amino-acid polypeptide reads, in one-letter code: MASYASEVKKELTSLEVHPEHAKAELAAFLRMNGVLNLHDHQFSLDITTENPAIARRIFKLIKVAYGIEPLLIVSRKMKLKKNNQYLVRLNRDVQKILENLNIWDPAKGLVTRIPQRIMKSSEGAMSYLRGAFLAGGSVNNPETSRYHLEIYSTYEDHNEDLAKLMNEYFYLNAKMTKRRRGYIVYLKEAAKIGDFLHVVGALNAMLNFEDLRIMRDMRNSVNRLVNCDTANMKKTASASAKQVEDIQLIQKEKGIDSLPEKLQILARFRLAHPELTLKEVADQIPDGPISKSGVNHRFKKLHELAETLKE.

The H-T-H motif DNA-binding region spans 277–311; that stretch reads TLKEVADQIPDGPISKSGVNHRFKKLHELAETLKE.

This sequence belongs to the WhiA family.

In terms of biological role, involved in cell division and chromosome segregation. The chain is Probable cell division protein WhiA from Lactobacillus helveticus (strain DPC 4571).